The chain runs to 100 residues: Sodium-influx-stimulating peptide (100 aa).

An N-terminal signal peptide occupies residues 1–23; that stretch reads MLSSVALRYLLVLSLAFLAVVTS.

Post-translationally, three disulfide bonds are present. Expressed by the yellow cells, peptidergic (neuroendocrine) neurons of the central nervous system.

Functionally, stimulates integumental Na(+) uptake. Controls the activity of sodium pumps in the integument, pericardium, ureter and nephridial gland. This Lymnaea stagnalis (Great pond snail) protein is Sodium-influx-stimulating peptide (SIS).